We begin with the raw amino-acid sequence, 545 residues long: T-complex protein 1 subunit alpha (545 aa).

An N-acetylserine modification is found at S2.

This sequence belongs to the TCP-1 chaperonin family. In terms of assembly, heterooligomeric complex of about 850 to 900 kDa that forms two stacked rings, 12 to 16 nm in diameter.

It is found in the cytoplasm. Its function is as follows. Molecular chaperone; assists the folding of proteins upon ATP hydrolysis. Known to play a role, in vitro, in the folding of actin and tubulin. This Arabidopsis thaliana (Mouse-ear cress) protein is T-complex protein 1 subunit alpha.